Here is a 271-residue protein sequence, read N- to C-terminus: Neurexophilin-1 (271 aa).

A signal peptide spans 1–21 (MQAACWYVLFLLQPTVYLVTC). Residues 22-97 (ANLTNGGKSE…WDWLRNSTDL (76 aa)) are II. 6 N-linked (GlcNAc...) asparagine glycosylation sites follow: Asn-23, Asn-68, Asn-93, Asn-146, Asn-156, and Asn-162. The segment at 98–176 (QEPRPRAKRR…LVPPTKIVEF (79 aa)) is III. Residues 177–185 (DLAQQTVID) are IV (linker domain). The v (Cys-rich) stretch occupies residues 186 to 271 (AKDSKSFNCR…HSDTPYFPSG (86 aa)).

It belongs to the neurexophilin family.

It localises to the secreted. Its function is as follows. May be signaling molecules that resemble neuropeptides and that act by binding to alpha-neurexins and possibly other receptors. The sequence is that of Neurexophilin-1 (NXPH1) from Homo sapiens (Human).